Here is a 1045-residue protein sequence, read N- to C-terminus: Extracellular serine protease (1045 aa).

The signal sequence occupies residues 1-27 (MILNKKLKLAYCVFLGCYGLSLHSSLA). The region spanning 49–396 (QWGLEAISAE…WGRVNLRDAI (348 aa)) is the Peptidase S8 domain. Catalysis depends on charge relay system residues D76, H112, and S341. Positions 646–1045 (SLASTENDKE…SVNAGLTWRF (400 aa)) are excised as a propeptide. In terms of domain architecture, Autotransporter spans 769-1045 (IKADDNGAWA…SVNAGLTWRF (277 aa)).

The protein belongs to the peptidase S8 family.

Its subcellular location is the secreted. This chain is Extracellular serine protease, found in Serratia marcescens.